The sequence spans 617 residues: Neopullulanase SusA (617 aa).

The signal sequence occupies residues 1–22 (MKRNLLFIILLLLLPGLHQVFA). Ca(2+) contacts are provided by Asn-138, Asn-143, Asp-144, Gly-164, and Asp-166. Active-site residues include Asp-331 and Glu-360.

Belongs to the glycosyl hydrolase 13 family. Requires Ca(2+) as cofactor.

It is found in the periplasm. The enzyme catalyses Hydrolysis of pullulan to panose (6-alpha-D-glucosylmaltose).. It participates in glycan degradation; starch degradation. Functionally, neopullulanase that cleaves 1,4-alpha-glucosidic linkages in starch to produce disaccharides or trisaccharides in starch degradation. In Bacteroides thetaiotaomicron (strain ATCC 29148 / DSM 2079 / JCM 5827 / CCUG 10774 / NCTC 10582 / VPI-5482 / E50), this protein is Neopullulanase SusA (susA).